A 294-amino-acid polypeptide reads, in one-letter code: Casein kinase II subunit beta (294 aa).

2 disordered regions span residues 66–90 and 269–294; these read DHNT…SKRN and KRME…MASE. Positions 70 to 87 are enriched in low complexity; sequence DNTTTNTSNNNDSRNGTS. A compositionally biased stretch (acidic residues) spans 273-288; sequence EDDEEEEDEVEEEDDD.

Belongs to the casein kinase 2 subunit beta family. As to quaternary structure, tetramer composed of two alpha chains, one beta chain and one beta' chain. Post-translationally, phosphorylated by alpha subunit.

Regulatory subunit of casein kinase II/CK2. As part of the kinase complex regulates the basal catalytic activity of the alpha subunit a constitutively active serine/threonine-protein kinase that phosphorylates a large number of substrates containing acidic residues C-terminal to the phosphorylated serine or threonine. This Candida albicans (Yeast) protein is Casein kinase II subunit beta (CKB1).